We begin with the raw amino-acid sequence, 195 residues long: U8 snoRNA-decapping enzyme (195 aa).

The Nudix hydrolase domain occupies 18 to 173 (DWRHACHALL…IGAAREQLLE (156 aa)). 3 residues coordinate substrate: His24, Arg50, and Phe57. Residues Gly59, Glu76, Glu80, and His99 each coordinate Mn(2+). The short motif at 61 to 82 (FVDAQDSCLEDGLNRELREELG) is the Nudix box element. Gln170 is a substrate binding site. Mn(2+) is bound at residue Glu173.

It belongs to the Nudix hydrolase family. NUDT16 subfamily. In terms of assembly, homodimer. Mg(2+) serves as cofactor. Mn(2+) is required as a cofactor. It depends on Co(2+) as a cofactor. As to expression, expressed in brain, testis, spleen, lung, heart, liver, kidney and muscle (at protein level).

Its subcellular location is the nucleus. The protein localises to the nucleolus. It localises to the nucleoplasm. It is found in the cytoplasm. The enzyme catalyses a 5'-end (N(7)-methyl 5'-triphosphoguanosine)-ribonucleoside in mRNA + H2O = N(7)-methyl-GDP + a 5'-end phospho-ribonucleoside in mRNA + 2 H(+). The catalysed reaction is IDP + H2O = IMP + phosphate + H(+). It catalyses the reaction dIDP + H2O = dIMP + phosphate + H(+). It carries out the reaction a 5'-end NAD(+)-phospho-ribonucleoside in mRNA + H2O = a 5'-end phospho-ribonucleoside in mRNA + NAD(+) + H(+). The enzyme catalyses a 5'-end FAD-phospho-ribonucleoside in mRNA + H2O = a 5'-end phospho-adenosine-phospho-ribonucleoside in mRNA + FMN + 2 H(+). The catalysed reaction is a 5'-end CoA-ribonucleoside in mRNA + H2O = a 5'-end phospho-adenosine-phospho-ribonucleoside in mRNA + (R)-4'-phosphopantetheine + 2 H(+). In terms of biological role, RNA-binding and decapping enzyme that catalyzes the cleavage of the cap structure of snoRNAs and mRNAs in a metal-dependent manner. Part of the U8 snoRNP complex that is required for the accumulation of mature 5.8S and 28S rRNA. Has diphosphatase activity and removes m7G and/or m227G caps from U8 snoRNA and leaves a 5'monophosphate on the RNA. Also catalyzes the cleavage of the cap structure on mRNAs. Does not hydrolyze cap analog structures like 7-methylguanosine nucleoside triphosphate (m7GpppG). Also hydrolysis m7G- and m227G U3-capped RNAs but with less efficiencies. Has broad substrate specificity with manganese or cobalt as cofactor and can act on various RNA species. Binds to the U8 snoRNA; metal is not required for RNA-binding. May play a role in the regulation of snoRNAs and mRNAs degradation. Also acts as a phosphatase; hydrolyzes the non-canonical purine nucleotides inosine diphosphate (IDP) and deoxyinosine diphosphate (dITP) as well as guanosine diphosphate (GDP), deoxyguanosine diphosphate (dGDP), xanthine diphosphate (XDP), inosine triphosphate (ITP) and deoxyinosine triphosphate (ITP) to their respective monophosphate derivatives and does not distinguish between the deoxy- and ribose forms. The order of activity with different substrates is IDP &gt; dIDP &gt;&gt; GDP = dGDP &gt; XDP = ITP = dITP. Binds strongly to GTP, ITP and XTP. Participates in the hydrolysis of dIDP/IDP and probably excludes non-canonical purines from RNA and DNA precursor pools, thus preventing their incorporation into RNA and DNA and avoiding chromosomal lesions. Exhibits decapping activity towards NAD-capped RNAs and FAD-capped RNAs. Exhibits decapping activity towards dpCoA-capped RNAs in vitro. This is U8 snoRNA-decapping enzyme (Nudt16) from Mus musculus (Mouse).